Reading from the N-terminus, the 617-residue chain is Probable LRR receptor-like serine/threonine-protein kinase RKF3 (617 aa).

A signal peptide spans 1–20 (MLFLRRIAVVFFVFTSFSAA). The Extracellular segment spans residues 21 to 212 (QNSTCPLDFS…PTSSGANKVK (192 aa)). N-linked (GlcNAc...) asparagine glycans are attached at residues asparagine 22, asparagine 124, asparagine 135, and asparagine 165. A helical membrane pass occupies residues 213 to 233 (VLVSSFSVLLVASVLVITAWF). The Cytoplasmic portion of the chain corresponds to 234-617 (WYCRRKKSKL…DGPSGNTNTT (384 aa)). The Protein kinase domain maps to 283-563 (FSRHNIIGRG…VKMLESNEFT (281 aa)). Residues 289 to 297 (IGRGGYGNV) and lysine 311 each bind ATP. Aspartate 412 serves as the catalytic Proton acceptor. The tract at residues 585-617 (VSSSSGSGKLTSPTGYQAFSFGGDGPSGNTNTT) is disordered.

This sequence belongs to the protein kinase superfamily. Ser/Thr protein kinase family. Expressed in the whole plant at low levels.

It localises to the cell membrane. The enzyme catalyses L-seryl-[protein] + ATP = O-phospho-L-seryl-[protein] + ADP + H(+). It carries out the reaction L-threonyl-[protein] + ATP = O-phospho-L-threonyl-[protein] + ADP + H(+). The protein is Probable LRR receptor-like serine/threonine-protein kinase RKF3 (RKF3) of Arabidopsis thaliana (Mouse-ear cress).